A 433-amino-acid polypeptide reads, in one-letter code: Histidinol dehydrogenase 2 (433 aa).

The NAD(+) site is built by Tyr-130, Gln-192, and Asn-215. Residues Ser-238, Gln-260, and His-263 each contribute to the substrate site. Positions 260 and 263 each coordinate Zn(2+). Catalysis depends on proton acceptor residues Glu-328 and His-329. Substrate is bound by residues His-329, Asp-362, Glu-416, and His-421. Asp-362 is a Zn(2+) binding site. His-421 contacts Zn(2+).

It belongs to the histidinol dehydrogenase family. It depends on Zn(2+) as a cofactor.

The catalysed reaction is L-histidinol + 2 NAD(+) + H2O = L-histidine + 2 NADH + 3 H(+). It participates in amino-acid biosynthesis; L-histidine biosynthesis; L-histidine from 5-phospho-alpha-D-ribose 1-diphosphate: step 9/9. Catalyzes the sequential NAD-dependent oxidations of L-histidinol to L-histidinaldehyde and then to L-histidine. This Trichormus variabilis (strain ATCC 29413 / PCC 7937) (Anabaena variabilis) protein is Histidinol dehydrogenase 2.